Reading from the N-terminus, the 397-residue chain is N(6)-adenosine-methyltransferase non-catalytic subunit METTL14 (397 aa).

2 disordered regions span residues 37–67 (NAED…KKTP) and 368–397 (ELLR…GRPR). Positions 40-51 (DINSSRQLNSGG) are enriched in polar residues. The segment covering 382-397 (LRGRGRGFPRGRGRPR) has biased composition (basic residues).

The protein belongs to the MT-A70-like family. As to quaternary structure, component of the WMM complex, a N6-methyltransferase complex composed of a catalytic subcomplex, named MAC, and of an associated subcomplex, named MACOM. The MAC subcomplex is composed of Ime4/Mettl3 and Mettl14. The MACOM subcomplex is composed of fl(2)d, Flacc/Xio, Hakai, vir, and, in some cases of nito.

It localises to the nucleus. In terms of biological role, non-catalytic component of the WMM complex, a complex that mediates N6-methyladenosine (m6A) methylation of mRNAs, a modification that plays a role in the efficiency of mRNA splicing and is required for sex determination. In the heterodimer formed with Ime4/Mettl3, Mettl14 constitutes the RNA-binding scaffold that recognizes the substrate rather than the catalytic core. Required for sex determination and dosage compensation via Sxl alternative splicing: m6A methylation acts as a key regulator of Sxl pre-mRNA and promotes female-specific alternative splicing of Sxl, which determines female physiognomy. M6A methylation is also required for neuronal functions. The protein is N(6)-adenosine-methyltransferase non-catalytic subunit METTL14 of Drosophila melanogaster (Fruit fly).